The chain runs to 286 residues: Phosphate import ATP-binding protein PstB (286 aa).

An ABC transporter domain is found at 40-281 (IAVRNLDFYY…PREQRTQEYI (242 aa)). Residue 72–79 (GPSGCGKS) participates in ATP binding.

The protein belongs to the ABC transporter superfamily. Phosphate importer (TC 3.A.1.7) family. As to quaternary structure, the complex is composed of two ATP-binding proteins (PstB), two transmembrane proteins (PstC and PstA) and a solute-binding protein (PstS).

It localises to the cell inner membrane. The catalysed reaction is phosphate(out) + ATP + H2O = ADP + 2 phosphate(in) + H(+). In terms of biological role, part of the ABC transporter complex PstSACB involved in phosphate import. Responsible for energy coupling to the transport system. The sequence is that of Phosphate import ATP-binding protein PstB from Granulibacter bethesdensis (strain ATCC BAA-1260 / CGDNIH1).